A 76-amino-acid polypeptide reads, in one-letter code: Conotoxin ArMKLT2-032 (76 aa).

The signal sequence occupies residues 1-22 (MKLTCVLIIAVLFLTACQLTTG). A propeptide spanning residues 23–46 (ETYSRGEQKDHALRSTDKNSKLTR) is cleaved from the precursor. Gln47 carries the post-translational modification Pyrrolidone carboxylic acid. 3 cysteine pairs are disulfide-bonded: Cys48/Cys62, Cys55/Cys66, and Cys61/Cys73.

Belongs to the conotoxin O1 superfamily. As to expression, expressed by the venom duct.

It is found in the secreted. In Conus arenatus (Sand-dusted cone), this protein is Conotoxin ArMKLT2-032.